A 67-amino-acid chain; its full sequence is Putative antitoxin PF1308 (67 aa).

The protein belongs to the UPF0165 family.

Possibly the antitoxin component of a type II toxin-antitoxin (TA) system. This Pyrococcus furiosus (strain ATCC 43587 / DSM 3638 / JCM 8422 / Vc1) protein is Putative antitoxin PF1308.